A 612-amino-acid polypeptide reads, in one-letter code: Elongation factor 4 (612 aa).

Residues 12-194 form the tr-type G domain; it reads SRIRNFSIIA…QIVEKVPAPT (183 aa). Residues 24–29 and 141–144 each bind GTP; these read DHGKST and NKID.

Belongs to the TRAFAC class translation factor GTPase superfamily. Classic translation factor GTPase family. LepA subfamily.

It is found in the cell membrane. It carries out the reaction GTP + H2O = GDP + phosphate + H(+). Required for accurate and efficient protein synthesis under certain stress conditions. May act as a fidelity factor of the translation reaction, by catalyzing a one-codon backward translocation of tRNAs on improperly translocated ribosomes. Back-translocation proceeds from a post-translocation (POST) complex to a pre-translocation (PRE) complex, thus giving elongation factor G a second chance to translocate the tRNAs correctly. Binds to ribosomes in a GTP-dependent manner. This Bacillus subtilis (strain 168) protein is Elongation factor 4.